A 129-amino-acid polypeptide reads, in one-letter code: Succinate dehydrogenase cytochrome b556 subunit (129 aa).

Topologically, residues 1 to 26 are cytoplasmic; it reads MIRNVKKQRPVNLDLQTIRFPITAIA. Residues 27–52 form a helical membrane-spanning segment; it reads SILHRVSGVITFVAVGILLWLLGTSL. At 53 to 68 the chain is on the periplasmic side; the sequence is SSPEGFEQASAIMGSF. The helical transmembrane segment at 69 to 89 threads the bilayer; that stretch reads FVKFIMWGILTALAYHVVVGI. Histidine 84 is a heme binding site. The Cytoplasmic portion of the chain corresponds to 90–108; sequence RHMMMDFGYLEETFEAGKR. Residues 109-129 traverse the membrane as a helical segment; that stretch reads SAKISFVITVVLSLLAGVLVW.

Belongs to the cytochrome b560 family. Part of an enzyme complex containing four subunits: a flavoprotein, an iron-sulfur protein, plus two membrane-anchoring proteins, SdhC and SdhD. The complex can form homotrimers. The cofactor is heme.

It is found in the cell inner membrane. Its pathway is carbohydrate metabolism; tricarboxylic acid cycle. In terms of biological role, membrane-anchoring subunit of succinate dehydrogenase (SDH). In Escherichia coli O157:H7, this protein is Succinate dehydrogenase cytochrome b556 subunit (sdhC).